The sequence spans 90 residues: Small ribosomal subunit protein bS20 (90 aa).

A compositionally biased stretch (polar residues) spans 1–10 (MANHKSTQKS). Residues 1-25 (MANHKSTQKSIRQDQKRNLINKSRK) are disordered.

The protein belongs to the bacterial ribosomal protein bS20 family.

Functionally, binds directly to 16S ribosomal RNA. This Orientia tsutsugamushi (strain Ikeda) (Rickettsia tsutsugamushi) protein is Small ribosomal subunit protein bS20.